We begin with the raw amino-acid sequence, 236 residues long: THO complex subunit 7B (236 aa).

Residues 99 to 228 are a coiled coil; it reads EANLREKESF…IRSASEDQRN (130 aa).

Belongs to the THOC7 family. As to quaternary structure, component of the THO complex, which is composed of THO1, THO2, THO3, THO5, THO6 and THO7.

Its subcellular location is the nucleus. Its function is as follows. Acts as a component of the THO subcomplex of the TREX complex which is thought to couple mRNA transcription, processing and nuclear export. The sequence is that of THO complex subunit 7B (THO7B) from Arabidopsis thaliana (Mouse-ear cress).